The following is a 114-amino-acid chain: Large ribosomal subunit protein uL22 (114 aa).

Belongs to the universal ribosomal protein uL22 family. Part of the 50S ribosomal subunit.

In terms of biological role, this protein binds specifically to 23S rRNA; its binding is stimulated by other ribosomal proteins, e.g. L4, L17, and L20. It is important during the early stages of 50S assembly. It makes multiple contacts with different domains of the 23S rRNA in the assembled 50S subunit and ribosome. The globular domain of the protein is located near the polypeptide exit tunnel on the outside of the subunit, while an extended beta-hairpin is found that lines the wall of the exit tunnel in the center of the 70S ribosome. This Streptococcus sanguinis (strain SK36) protein is Large ribosomal subunit protein uL22.